Here is a 222-residue protein sequence, read N- to C-terminus: N-(5'-phosphoribosyl)anthranilate isomerase (222 aa).

It belongs to the TrpF family.

It catalyses the reaction N-(5-phospho-beta-D-ribosyl)anthranilate = 1-(2-carboxyphenylamino)-1-deoxy-D-ribulose 5-phosphate. It participates in amino-acid biosynthesis; L-tryptophan biosynthesis; L-tryptophan from chorismate: step 3/5. In Rhizobium etli (strain CIAT 652), this protein is N-(5'-phosphoribosyl)anthranilate isomerase.